The primary structure comprises 119 residues: Fluoride-specific ion channel FluC (119 aa).

The next 4 membrane-spanning stretches (helical) occupy residues I5 to A25, L30 to F50, W59 to L79, and S92 to L112. 2 residues coordinate Na(+): G69 and T72.

The protein belongs to the fluoride channel Fluc/FEX (TC 1.A.43) family.

Its subcellular location is the cell inner membrane. It catalyses the reaction fluoride(in) = fluoride(out). Its activity is regulated as follows. Na(+) is not transported, but it plays an essential structural role and its presence is essential for fluoride channel function. Fluoride-specific ion channel. Important for reducing fluoride concentration in the cell, thus reducing its toxicity. In Neisseria meningitidis serogroup A / serotype 4A (strain DSM 15465 / Z2491), this protein is Fluoride-specific ion channel FluC.